The chain runs to 546 residues: CTP synthase (546 aa).

Residues 1–265 are amidoligase domain; that stretch reads MTKYIFVTGG…DDIIAEQLQL (265 aa). Residue Ser13 coordinates CTP. Residue Ser13 coordinates UTP. ATP contacts are provided by residues 14-19 and Asp71; that span reads SLGKGI. Positions 71 and 139 each coordinate Mg(2+). CTP contacts are provided by residues 146 to 148, 186 to 191, and Lys222; these read DIE and KTKPTQ. UTP-binding positions include 186-191 and Lys222; that span reads KTKPTQ. Residues 290–542 enclose the Glutamine amidotransferase type-1 domain; it reads KIAMVGKYVD…VKAALAHQAD (253 aa). Residue Gly351 coordinates L-glutamine. The active-site Nucleophile; for glutamine hydrolysis is Cys378. L-glutamine contacts are provided by residues 379-382, Glu402, and Arg469; that span reads LGMQ. Active-site residues include His515 and Glu517.

It belongs to the CTP synthase family. In terms of assembly, homotetramer.

It carries out the reaction UTP + L-glutamine + ATP + H2O = CTP + L-glutamate + ADP + phosphate + 2 H(+). The catalysed reaction is L-glutamine + H2O = L-glutamate + NH4(+). The enzyme catalyses UTP + NH4(+) + ATP = CTP + ADP + phosphate + 2 H(+). It participates in pyrimidine metabolism; CTP biosynthesis via de novo pathway; CTP from UDP: step 2/2. Allosterically activated by GTP, when glutamine is the substrate; GTP has no effect on the reaction when ammonia is the substrate. The allosteric effector GTP functions by stabilizing the protein conformation that binds the tetrahedral intermediate(s) formed during glutamine hydrolysis. Inhibited by the product CTP, via allosteric rather than competitive inhibition. Functionally, catalyzes the ATP-dependent amination of UTP to CTP with either L-glutamine or ammonia as the source of nitrogen. Regulates intracellular CTP levels through interactions with the four ribonucleotide triphosphates. This is CTP synthase from Chromobacterium violaceum (strain ATCC 12472 / DSM 30191 / JCM 1249 / CCUG 213 / NBRC 12614 / NCIMB 9131 / NCTC 9757 / MK).